The chain runs to 462 residues: TNF receptor-associated factor family protein DDB_G0267754 (462 aa).

The segment at 24-62 adopts an RING-type; degenerate zinc-finger fold; sequence CCVCECLLIEALQCRNGHVACKNCFIKIVKSKKECMTCR. The tract at residues 104-127 is disordered; it reads KNGNGNEGSSANEIEQPQQPQQQQ. 2 TRAF-type zinc fingers span residues 150–217 and 214–273; these read SHLK…SHTE and SHTE…NQLA. One can recognise an MATH domain in the interval 326–449; that stretch reads MFRGKWVISN…NDTLTINFSI (124 aa).

Belongs to the TNF receptor-associated factor family. A subfamily.

It localises to the cytoplasm. Its function is as follows. Probable adapter protein and signal transducer that links members of the tumor necrosis factor receptor family to different signaling pathways by association with the receptor cytoplasmic domain and kinases. This Dictyostelium discoideum (Social amoeba) protein is TNF receptor-associated factor family protein DDB_G0267754.